The following is a 139-amino-acid chain: Nuclear receptor 2C2-associated protein (139 aa).

Belongs to the NR2C2AP family. Interacts with NR2C2/TR4. In terms of tissue distribution, expressed in all tissues examined, with highest expression in heart, skeletal muscle and pancreas.

It is found in the nucleus. May act as a repressor of NR2C2-mediated transactivation by suppressing the binding between NR2C2/TR4 and the TR4-response element in target genes. In Homo sapiens (Human), this protein is Nuclear receptor 2C2-associated protein (NR2C2AP).